Reading from the N-terminus, the 41-residue chain is Large ribosomal subunit protein bL36B (41 aa).

Belongs to the bacterial ribosomal protein bL36 family.

This Neisseria meningitidis serogroup C (strain 053442) protein is Large ribosomal subunit protein bL36B.